A 111-amino-acid polypeptide reads, in one-letter code: Guanylate cyclase activator 2B (111 aa).

An N-terminal signal peptide occupies residues 1–26 (MGSRTLLGHLSVLAVVLLLLLQGTQS). A propeptide spanning residues 27–96 (VDIKYQGYQV…SILQALRTMD (70 aa)) is cleaved from the precursor. Cystine bridges form between Cys-67–Cys-80, Cys-100–Cys-108, and Cys-103–Cys-111.

It belongs to the guanylin family.

The protein localises to the secreted. In terms of biological role, endogenous activator of intestinal guanylate cyclase. It stimulates this enzyme through the same receptor binding region as the heat-stable enterotoxins. May be a potent physiological regulator of intestinal fluid and electrolyte transport. May be an autocrine/paracrine regulator of intestinal salt and water transport. This chain is Guanylate cyclase activator 2B (GUCA2B), found in Cavia porcellus (Guinea pig).